We begin with the raw amino-acid sequence, 486 residues long: E3 ubiquitin-protein ligase TRIM58 (486 aa).

An RING-type zinc finger spans residues 16–61 (CPVCLDFLQEPVSVDCGHSFCLRCISEFCEKSDGAQGGVYACPQCR). A B box-type zinc finger spans residues 91–132 (PGARRCARHGEDLSRFCEEDEAALCWVCDAGPEHRTHRTAPL). Zn(2+) is bound by residues C96, H99, C118, and H124. Residues 193 to 242 (LAQEEQRQLRRLEAEERATLQRLRESKSRLVQQSKALKELADELQERCQR) are a coiled coil. One can recognise a B30.2/SPRY domain in the interval 273–463 (LKTACCIPGR…TPLILPPTTI (191 aa)).

Belongs to the TRIM/RBCC family. Expressed in erythroblasts.

It carries out the reaction S-ubiquitinyl-[E2 ubiquitin-conjugating enzyme]-L-cysteine + [acceptor protein]-L-lysine = [E2 ubiquitin-conjugating enzyme]-L-cysteine + N(6)-ubiquitinyl-[acceptor protein]-L-lysine.. It functions in the pathway protein modification; protein ubiquitination. In terms of biological role, E3 ubiquitin ligase induced during late erythropoiesis. Directly binds and ubiquitinates the intermediate chain of the microtubule motor dynein (DYNC1LI1/DYNC1LI2), stimulating the degradation of the dynein holoprotein complex. May participate in the erythroblast enucleation process through regulation of nuclear polarization. This chain is E3 ubiquitin-protein ligase TRIM58 (TRIM58), found in Homo sapiens (Human).